Reading from the N-terminus, the 95-residue chain is Small ribosomal subunit protein bS6 (95 aa).

This sequence belongs to the bacterial ribosomal protein bS6 family.

In terms of biological role, binds together with bS18 to 16S ribosomal RNA. The polypeptide is Small ribosomal subunit protein bS6 (Clostridium beijerinckii (strain ATCC 51743 / NCIMB 8052) (Clostridium acetobutylicum)).